The chain runs to 357 residues: Fructose-bisphosphate aldolase, cytoplasmic isozyme 1 (357 aa).

R52 and K142 together coordinate substrate. Residue E183 is the Proton acceptor of the active site. K225 functions as the Schiff-base intermediate with dihydroxyacetone-P in the catalytic mechanism.

Belongs to the class I fructose-bisphosphate aldolase family.

The protein resides in the cytoplasm. It catalyses the reaction beta-D-fructose 1,6-bisphosphate = D-glyceraldehyde 3-phosphate + dihydroxyacetone phosphate. It functions in the pathway carbohydrate degradation; glycolysis; D-glyceraldehyde 3-phosphate and glycerone phosphate from D-glucose: step 4/4. The sequence is that of Fructose-bisphosphate aldolase, cytoplasmic isozyme 1 from Pisum sativum (Garden pea).